The sequence spans 255 residues: 3-deoxy-manno-octulosonate cytidylyltransferase (255 aa).

The protein belongs to the KdsB family.

The protein localises to the cytoplasm. The enzyme catalyses 3-deoxy-alpha-D-manno-oct-2-ulosonate + CTP = CMP-3-deoxy-beta-D-manno-octulosonate + diphosphate. It functions in the pathway nucleotide-sugar biosynthesis; CMP-3-deoxy-D-manno-octulosonate biosynthesis; CMP-3-deoxy-D-manno-octulosonate from 3-deoxy-D-manno-octulosonate and CTP: step 1/1. Its pathway is bacterial outer membrane biogenesis; lipopolysaccharide biosynthesis. In terms of biological role, activates KDO (a required 8-carbon sugar) for incorporation into bacterial lipopolysaccharide in Gram-negative bacteria. In Hahella chejuensis (strain KCTC 2396), this protein is 3-deoxy-manno-octulosonate cytidylyltransferase.